Here is a 260-residue protein sequence, read N- to C-terminus: Acyl-[acyl-carrier-protein]--UDP-N-acetylglucosamine O-acyltransferase (260 aa).

It belongs to the transferase hexapeptide repeat family. LpxA subfamily. As to quaternary structure, homotrimer.

It localises to the cytoplasm. The catalysed reaction is a (3R)-hydroxyacyl-[ACP] + UDP-N-acetyl-alpha-D-glucosamine = a UDP-3-O-[(3R)-3-hydroxyacyl]-N-acetyl-alpha-D-glucosamine + holo-[ACP]. The protein operates within glycolipid biosynthesis; lipid IV(A) biosynthesis; lipid IV(A) from (3R)-3-hydroxytetradecanoyl-[acyl-carrier-protein] and UDP-N-acetyl-alpha-D-glucosamine: step 1/6. Involved in the biosynthesis of lipid A, a phosphorylated glycolipid that anchors the lipopolysaccharide to the outer membrane of the cell. The chain is Acyl-[acyl-carrier-protein]--UDP-N-acetylglucosamine O-acyltransferase from Aliarcobacter butzleri (strain RM4018) (Arcobacter butzleri).